A 620-amino-acid chain; its full sequence is Glutathione-regulated potassium-efflux system protein KefC (620 aa).

A run of 12 helical transmembrane segments spans residues 4–24, 26–46, 54–74, 90–110, 114–134, 149–169, 178–198, 218–238, 270–290, 294–314, 327–347, and 359–379; these read HTLLQALIYLGSAALIVPIAV, LGLGSVLGYLIAGCIIGPWGL, SILHFAEIGVVLMLFVIGLEL, GALQMVVCGGLIGLFCMFLGL, VAELIGMTLALSSTAIAMQAM, FAVLLFQDIAAIPLVAMIPLL, LGAFALSALKVAGALALVVLL, VFSAVALFLVFGFGLLLEEVG, GLLLGLFFIGVGMSIDFGTLV, LRILLLLAGFLAIKIVMLWLV, WFAVLLGQGSEFAFVVFGAAQ, and ALTLAVALSMAATPIFLVLLT. Residues 399–518 form the RCK N-terminal domain; sequence QPRVIVAGFG…AGVAMPERET (120 aa). The interval 599 to 620 is disordered; the sequence is QGTAEGKHSGEAADEPEVKPSI.

It belongs to the monovalent cation:proton antiporter 2 (CPA2) transporter (TC 2.A.37) family. KefC subfamily. As to quaternary structure, homodimer. Interacts with the regulatory subunit KefF.

It localises to the cell inner membrane. Functionally, pore-forming subunit of a potassium efflux system that confers protection against electrophiles. Catalyzes K(+)/H(+) antiport. The protein is Glutathione-regulated potassium-efflux system protein KefC of Salmonella dublin (strain CT_02021853).